The primary structure comprises 381 residues: Translation initiation factor eIF2B subunit beta (381 aa).

Residues 125–148 are disordered; sequence LQKPEQPHQNRKNSSGSSSMKTKT. Over residues 136–145 the composition is skewed to polar residues; sequence KNSSGSSSMK.

This sequence belongs to the eIF-2B alpha/beta/delta subunits family. In terms of assembly, component of the translation initiation factor 2B (eIF2B) complex which is a heterodecamer of two sets of five different subunits: alpha, beta, gamma, delta and epsilon. Subunits alpha, beta and delta comprise a regulatory subcomplex and subunits epsilon and gamma comprise a catalytic subcomplex. Within the complex, the hexameric regulatory complex resides at the center, with the two heterodimeric catalytic subcomplexes bound on opposite sides.

The protein localises to the cytoplasm. It is found in the cytosol. Functionally, acts as a component of the translation initiation factor 2B (eIF2B) complex, which catalyzes the exchange of GDP for GTP on the eukaryotic initiation factor 2 (eIF2) complex gamma subunit. Its guanine nucleotide exchange factor activity is repressed when bound to eIF2 complex phosphorylated on the alpha subunit, thereby limiting the amount of methionyl-initiator methionine tRNA available to the ribosome and consequently global translation is repressed. It activates the synthesis of GCN4 in yeast under amino acid starvation conditions by suppressing the inhibitory effects of multiple AUG codons present in the leader of GCN4 mRNA. It may promote either repression or activation of GCN4 expression depending on amino acid availability. GCD6 and GCD7 repress GCN4 expression at the translational level by ensuring that ribosomes which have translated UORF1 will reinitiate at UORF2, -3, or -4 and thus fail to reach the GCN4 start site. The chain is Translation initiation factor eIF2B subunit beta (GCD7) from Saccharomyces cerevisiae (strain ATCC 204508 / S288c) (Baker's yeast).